Reading from the N-terminus, the 145-residue chain is Large ribosomal subunit protein uL13 (145 aa).

It belongs to the universal ribosomal protein uL13 family. As to quaternary structure, part of the 50S ribosomal subunit.

Its function is as follows. This protein is one of the early assembly proteins of the 50S ribosomal subunit, although it is not seen to bind rRNA by itself. It is important during the early stages of 50S assembly. This chain is Large ribosomal subunit protein uL13, found in Staphylococcus epidermidis (strain ATCC 35984 / DSM 28319 / BCRC 17069 / CCUG 31568 / BM 3577 / RP62A).